The chain runs to 900 residues: E3 ubiquitin-protein ligase BRE1-like 2 (900 aa).

Positions 1–31 are disordered; that stretch reads MENQESDEPMQKKPHLLDSVSPNSMARNSSP. Residues 20–31 show a composition bias toward polar residues; the sequence is VSPNSMARNSSP. Coiled-coil stretches lie at residues 63 to 96, 217 to 300, 437 to 660, and 706 to 737; these read TVLQ…LQLN, EDAT…KDAA, SRIE…AEME, and SEKQ…EQMK. The segment at 848 to 887 adopts an RING-type zinc-finger fold; the sequence is CGVCFDRPKEVVIVKCYHLFCQQCIQRSLEIRHRKCPGCG.

This sequence belongs to the BRE1 family. In terms of assembly, may act as a tetramer consisting of two copies of HUB1 and two copies of HUB2. As to expression, ubiquitously expressed.

The protein resides in the nucleus. It catalyses the reaction S-ubiquitinyl-[E2 ubiquitin-conjugating enzyme]-L-cysteine + [acceptor protein]-L-lysine = [E2 ubiquitin-conjugating enzyme]-L-cysteine + N(6)-ubiquitinyl-[acceptor protein]-L-lysine.. It functions in the pathway protein modification; protein ubiquitination. Functionally, E3 ubiquitin-protein ligase that monoubiquitinates H2B to form H2BK143ub1. H2BK143ub1 gives a specific tag for epigenetic transcriptional activation and is also prerequisite for H3K4me and maybe H3K79me. It thereby plays a central role in histone code and gene regulation. Forms a ubiquitin ligase complex in cooperation with the E2 enzyme UBC2/RAD6. The polypeptide is E3 ubiquitin-protein ligase BRE1-like 2 (HUB2) (Arabidopsis thaliana (Mouse-ear cress)).